A 171-amino-acid polypeptide reads, in one-letter code: Mitochondrial import inner membrane translocase subunit Tim17-A (171 aa).

Cys-9 and Cys-78 are joined by a disulfide. 3 helical membrane-spanning segments follow: residues 17 to 37 (CGGAFTMGTIGGGIFQAFKGF), 63 to 77 (GGSFAVWGGLFSTID), and 113 to 133 (VGSAAMGGILLALIEGAGILL). The segment at 144–171 (GPQFTEDHSQLPSSQLPSSPFGDYRQYQ) is disordered. Residues 153 to 163 (QLPSSQLPSSP) show a composition bias toward low complexity.

The protein belongs to the Tim17/Tim22/Tim23 family. In terms of assembly, component of the TIM23 complex at least composed of TIMM23, TIMM17 (TIMM17A or TIMM17B) and TIMM50. The complex interacts with the TIMM44 component of the PAM complex and with DNAJC15. Post-translationally, degraded by YMEL1 downstream of the integrated stress response (ISR).

It localises to the mitochondrion inner membrane. In terms of biological role, essential component of the TIM23 complex, a complex that mediates the translocation of transit peptide-containing proteins across the mitochondrial inner membrane. This chain is Mitochondrial import inner membrane translocase subunit Tim17-A (Timm17a), found in Mus musculus (Mouse).